A 330-amino-acid polypeptide reads, in one-letter code: tRNA U34 carboxymethyltransferase (330 aa).

Residues K98, W112, K117, G137, 187 to 188 (ME), M203, Y207, and R322 contribute to the carboxy-S-adenosyl-L-methionine site. The disordered stretch occupies residues 309–330 (NPSKTIEGYPGPKRATLIAEKP).

Belongs to the class I-like SAM-binding methyltransferase superfamily. CmoB family. As to quaternary structure, homotetramer.

It catalyses the reaction carboxy-S-adenosyl-L-methionine + 5-hydroxyuridine(34) in tRNA = 5-carboxymethoxyuridine(34) in tRNA + S-adenosyl-L-homocysteine + H(+). Functionally, catalyzes carboxymethyl transfer from carboxy-S-adenosyl-L-methionine (Cx-SAM) to 5-hydroxyuridine (ho5U) to form 5-carboxymethoxyuridine (cmo5U) at position 34 in tRNAs. This chain is tRNA U34 carboxymethyltransferase, found in Marinobacter nauticus (strain ATCC 700491 / DSM 11845 / VT8) (Marinobacter aquaeolei).